Here is a 339-residue protein sequence, read N- to C-terminus: tRNA N6-adenosine threonylcarbamoyltransferase (339 aa).

The Fe cation site is built by His114 and His118. Substrate-binding positions include 137–141 (VVSGG), Asp170, Gly183, Asp187, and Asn277. Asp305 contributes to the Fe cation binding site.

It belongs to the KAE1 / TsaD family. The cofactor is Fe(2+).

It is found in the cytoplasm. The catalysed reaction is L-threonylcarbamoyladenylate + adenosine(37) in tRNA = N(6)-L-threonylcarbamoyladenosine(37) in tRNA + AMP + H(+). In terms of biological role, required for the formation of a threonylcarbamoyl group on adenosine at position 37 (t(6)A37) in tRNAs that read codons beginning with adenine. Is involved in the transfer of the threonylcarbamoyl moiety of threonylcarbamoyl-AMP (TC-AMP) to the N6 group of A37, together with TsaE and TsaB. TsaD likely plays a direct catalytic role in this reaction. This Clostridium perfringens (strain ATCC 13124 / DSM 756 / JCM 1290 / NCIMB 6125 / NCTC 8237 / Type A) protein is tRNA N6-adenosine threonylcarbamoyltransferase.